The sequence spans 194 residues: Probable nicotinate-nucleotide adenylyltransferase (194 aa).

This sequence belongs to the NadD family.

The enzyme catalyses nicotinate beta-D-ribonucleotide + ATP + H(+) = deamido-NAD(+) + diphosphate. Its pathway is cofactor biosynthesis; NAD(+) biosynthesis; deamido-NAD(+) from nicotinate D-ribonucleotide: step 1/1. Its function is as follows. Catalyzes the reversible adenylation of nicotinate mononucleotide (NaMN) to nicotinic acid adenine dinucleotide (NaAD). This Christiangramia forsetii (strain DSM 17595 / CGMCC 1.15422 / KT0803) (Gramella forsetii) protein is Probable nicotinate-nucleotide adenylyltransferase.